Here is a 117-residue protein sequence, read N- to C-terminus: Putative membrane protein insertion efficiency factor (117 aa).

It belongs to the UPF0161 family.

The protein localises to the cell inner membrane. Functionally, could be involved in insertion of integral membrane proteins into the membrane. The polypeptide is Putative membrane protein insertion efficiency factor (Nitrobacter winogradskyi (strain ATCC 25391 / DSM 10237 / CIP 104748 / NCIMB 11846 / Nb-255)).